The chain runs to 436 residues: ATP-dependent RNA helicase SUB2 (436 aa).

Residues 1–16 are compositionally biased toward acidic residues; it reads MSAEEDLIDYSDEELN. The disordered stretch occupies residues 1-33; sequence MSAEEDLIDYSDEELNTNETAAPAADSNGKKGE. Residues 52 to 80 carry the Q motif motif; sequence TGFRDFLLKPELLRAIGDCGFEHPSEVQQ. The Helicase ATP-binding domain maps to 83-258; the sequence is IPQAMLGGDI…KKFMQNPTEH (176 aa). Residue 96–103 coordinates ATP; sequence AKSGLGKT. Positions 205–208 match the DEAD box motif; the sequence is DECD. Residues 270–431 enclose the Helicase C-terminal domain; it reads GLQQYFVALE…EFPKDGIDAS (162 aa).

It belongs to the DEAD box helicase family. DECD subfamily.

The protein resides in the nucleus. The enzyme catalyses ATP + H2O = ADP + phosphate + H(+). Its function is as follows. ATP-binding RNA helicase involved in transcription elongation and required for the export of mRNA out of the nucleus. SUB2 also plays a role in pre-mRNA splicing and spliceosome assembly. May be involved in rDNA and telomeric silencing, and maintenance of genome integrity. This chain is ATP-dependent RNA helicase SUB2 (SUB2), found in Pyricularia oryzae (strain 70-15 / ATCC MYA-4617 / FGSC 8958) (Rice blast fungus).